A 360-amino-acid chain; its full sequence is NADH-quinone oxidoreductase subunit H (360 aa).

A run of 8 helical transmembrane segments spans residues 20–40 (GMVW…IPLM), 95–115 (GLFV…WVVI), 130–150 (LLLV…AGWA), 176–196 (FCLL…IVLA), 206–226 (GIGF…VYLI), 261–281 (IFFL…ALMF), 297–317 (IPGW…FIWI), and 336–356 (IFIP…LSPW).

Belongs to the complex I subunit 1 family. As to quaternary structure, NDH-1 is composed of 14 different subunits. Subunits NuoA, H, J, K, L, M, N constitute the membrane sector of the complex.

It localises to the cell inner membrane. It carries out the reaction a quinone + NADH + 5 H(+)(in) = a quinol + NAD(+) + 4 H(+)(out). NDH-1 shuttles electrons from NADH, via FMN and iron-sulfur (Fe-S) centers, to quinones in the respiratory chain. The immediate electron acceptor for the enzyme in this species is believed to be ubiquinone. Couples the redox reaction to proton translocation (for every two electrons transferred, four hydrogen ions are translocated across the cytoplasmic membrane), and thus conserves the redox energy in a proton gradient. This subunit may bind ubiquinone. The chain is NADH-quinone oxidoreductase subunit H from Verminephrobacter eiseniae (strain EF01-2).